The chain runs to 153 residues: Movement protein (153 aa).

Disordered regions lie at residues 1-24 (MAQE…EQDP) and 107-153 (ALSL…RNQR). Composition is skewed to polar residues over residues 109–122 (SLLS…NQPW) and 140–153 (GQRQ…RNQR).

This sequence belongs to the luteoviruses movement protein family.

Its subcellular location is the host nucleus envelope. In terms of biological role, transports viral genome to neighboring plant cells directly through plasmosdesmata, without any budding. The movement protein allows efficient cell to cell propagation, by bypassing the host cell wall barrier. Acts as a suppressor of RNA-mediated gene silencing, also known as post-transcriptional gene silencing (PTGS), a mechanism of plant viral defense that limits the accumulation of viral RNAs. This is Movement protein from Avena byzantina (Oat).